A 404-amino-acid chain; its full sequence is L-cysteine:1D-myo-inositol 2-amino-2-deoxy-alpha-D-glucopyranoside ligase (404 aa).

Cys-35 is a Zn(2+) binding site. L-cysteinyl-5'-AMP is bound by residues Cys-35 to Thr-38, Thr-50, and Asn-73 to Thr-75. Residues Ile-37 to His-47 carry the 'HIGH' region motif. The 'ERGGDP' region signature appears at Glu-178–Pro-183. Position 219 (Trp-219) interacts with L-cysteinyl-5'-AMP. A Zn(2+)-binding site is contributed by Cys-223. Gly-241–Asp-243 serves as a coordination point for L-cysteinyl-5'-AMP. His-248 contacts Zn(2+). Ile-275 contacts L-cysteinyl-5'-AMP. Positions Lys-281–Ser-285 match the 'KMSKS' region motif.

This sequence belongs to the class-I aminoacyl-tRNA synthetase family. MshC subfamily. Monomer. Zn(2+) is required as a cofactor.

It carries out the reaction 1D-myo-inositol 2-amino-2-deoxy-alpha-D-glucopyranoside + L-cysteine + ATP = 1D-myo-inositol 2-(L-cysteinylamino)-2-deoxy-alpha-D-glucopyranoside + AMP + diphosphate + H(+). Catalyzes the ATP-dependent condensation of GlcN-Ins and L-cysteine to form L-Cys-GlcN-Ins. This chain is L-cysteine:1D-myo-inositol 2-amino-2-deoxy-alpha-D-glucopyranoside ligase, found in Salinispora tropica (strain ATCC BAA-916 / DSM 44818 / JCM 13857 / NBRC 105044 / CNB-440).